Reading from the N-terminus, the 307-residue chain is Homoserine kinase (307 aa).

86-96 (PIARGLGSSAA) contacts ATP.

The protein belongs to the GHMP kinase family. Homoserine kinase subfamily.

The protein localises to the cytoplasm. It catalyses the reaction L-homoserine + ATP = O-phospho-L-homoserine + ADP + H(+). It participates in amino-acid biosynthesis; L-threonine biosynthesis; L-threonine from L-aspartate: step 4/5. Its function is as follows. Catalyzes the ATP-dependent phosphorylation of L-homoserine to L-homoserine phosphate. In Petrotoga mobilis (strain DSM 10674 / SJ95), this protein is Homoserine kinase.